The primary structure comprises 379 residues: S-adenosylmethionine decarboxylase proenzyme (379 aa).

Active-site residues include Glu-30 and Glu-33. Ser-96 (schiff-base intermediate with substrate; via pyruvic acid) is an active-site residue. The residue at position 96 (Ser-96) is a Pyruvic acid (Ser); by autocatalysis. Cys-110 functions as the Proton donor; for catalytic activity in the catalytic mechanism. Residues Ser-254 and His-267 each act as proton acceptor; for processing activity in the active site.

This sequence belongs to the eukaryotic AdoMetDC family. Heterotetramer of two alpha and two beta chains. The cofactor is pyruvate. Is synthesized initially as an inactive proenzyme. Formation of the active enzyme involves a self-maturation process in which the active site pyruvoyl group is generated from an internal serine residue via an autocatalytic post-translational modification. Two non-identical subunits are generated from the proenzyme in this reaction, and the pyruvate is formed at the N-terminus of the alpha chain, which is derived from the carboxyl end of the proenzyme. The post-translation cleavage follows an unusual pathway, termed non-hydrolytic serinolysis, in which the side chain hydroxyl group of the serine supplies its oxygen atom to form the C-terminus of the beta chain, while the remainder of the serine residue undergoes an oxidative deamination to produce ammonia and the pyruvoyl group blocking the N-terminus of the alpha chain.

The enzyme catalyses S-adenosyl-L-methionine + H(+) = S-adenosyl 3-(methylsulfanyl)propylamine + CO2. It participates in amine and polyamine biosynthesis; S-adenosylmethioninamine biosynthesis; S-adenosylmethioninamine from S-adenosyl-L-methionine: step 1/1. In terms of biological role, S-adenosylmethionine decarboxylase is essential for the biosynthesis of spermine and spermidine. The alpha subunit contains the active site. The sequence is that of S-adenosylmethionine decarboxylase proenzyme (amd1) from Dictyostelium discoideum (Social amoeba).